The sequence spans 195 residues: Interferon tau-5 (195 aa).

A signal peptide spans 1–23 (MAFVLSLLMALVLVSYGPGGSLG). 2 disulfide bridges follow: cysteine 24-cysteine 122 and cysteine 52-cysteine 162.

This sequence belongs to the alpha/beta interferon family. IFN-alphaII subfamily. Constitutively and exclusively expressed in the mononuclear cells of the extraembryonic trophectoderm.

The protein resides in the secreted. Functionally, paracrine hormone primarily responsible for maternal recognition of pregnancy. Interacts with endometrial receptors, probably type I interferon receptors, and blocks estrogen receptor expression, preventing the estrogen-induced increase in oxytocin receptor expression in the endometrium. This results in the suppression of the pulsatile endometrial release of the luteolytic hormone prostaglandin F2-alpha, hindering the regression of the corpus luteum (luteolysis) and therefore a return to ovarian cyclicity. This, and a possible direct effect of IFN-tau on prostaglandin synthesis, leads in turn to continued ovarian progesterone secretion, which stimulates the secretion by the endometrium of the nutrients required for the growth of the conceptus. In summary, displays particularly high antiviral and antiproliferative potency concurrently with particular weak cytotoxicity, high antiluteolytic activity and immunomodulatory properties. In contrast with other IFNs, IFN-tau is not virally inducible. The protein is Interferon tau-5 (IFNT5) of Ovis aries (Sheep).